The chain runs to 122 residues: Large ribosomal subunit protein uL14 (122 aa).

It belongs to the universal ribosomal protein uL14 family. In terms of assembly, part of the 50S ribosomal subunit. Forms a cluster with proteins L3 and L19. In the 70S ribosome, L14 and L19 interact and together make contacts with the 16S rRNA in bridges B5 and B8.

In terms of biological role, binds to 23S rRNA. Forms part of two intersubunit bridges in the 70S ribosome. The polypeptide is Large ribosomal subunit protein uL14 (Thermomicrobium roseum (strain ATCC 27502 / DSM 5159 / P-2)).